We begin with the raw amino-acid sequence, 111 residues long: Exocrine gland-secreted peptide 22 (111 aa).

Positions 1 to 24 (MNSVPVMLFSISILLAAMLTEGRG) are cleaved as a signal peptide.

This sequence belongs to the exocrine gland-secreted peptide family. In terms of tissue distribution, expressed in acinar cells of the lacrimal gland from where it is secreted into tears. Not detected in a range of other tissues tested including other exocrine glands, internal organs and sensory epithelia.

It localises to the secreted. In terms of biological role, pheromone produced by juveniles which activates a small number of vomeronasal organ sensory neurons and exhibits a powerful inhibitory effect on adult male mating behavior. In Mus musculus (Mouse), this protein is Exocrine gland-secreted peptide 22.